Here is an 84-residue protein sequence, read N- to C-terminus: Small ribosomal subunit protein eS27z (84 aa).

The segment at 39–61 adopts a C4-type zinc-finger fold; it reads CQGCFNITTVFSHSQTVVMCGNC.

This sequence belongs to the eukaryotic ribosomal protein eS27 family. In terms of assembly, (Microbial infection) May interact with Tomato yellow leaf curl virus (TYLCV) and papaya leaf curl China virus (PaLcuCNV) C2 proteins. This interaction prevents activation of Jasmonate signaling, thereby facilitating viral uptake by insects vectors. Zn(2+) is required as a cofactor.

This chain is Small ribosomal subunit protein eS27z (RPS27A), found in Arabidopsis thaliana (Mouse-ear cress).